A 483-amino-acid chain; its full sequence is ATP synthase subunit beta (483 aa).

162 to 169 (GGAGVGKT) serves as a coordination point for ATP.

This sequence belongs to the ATPase alpha/beta chains family. In terms of assembly, F-type ATPases have 2 components, CF(1) - the catalytic core - and CF(0) - the membrane proton channel. CF(1) has five subunits: alpha(3), beta(3), gamma(1), delta(1), epsilon(1). CF(0) has four main subunits: a(1), b(1), b'(1) and c(9-12).

The protein localises to the cellular thylakoid membrane. It carries out the reaction ATP + H2O + 4 H(+)(in) = ADP + phosphate + 5 H(+)(out). Its function is as follows. Produces ATP from ADP in the presence of a proton gradient across the membrane. The catalytic sites are hosted primarily by the beta subunits. The chain is ATP synthase subunit beta from Rippkaea orientalis (strain PCC 8801 / RF-1) (Cyanothece sp. (strain PCC 8801)).